A 510-amino-acid chain; its full sequence is GMP synthase [glutamine-hydrolyzing] (510 aa).

One can recognise a Glutamine amidotransferase type-1 domain in the interval 3 to 194 (QILILDFGSQ…ARVICGYKEK (192 aa)). Residue Cys-80 is the Nucleophile of the active site. Residues His-168 and Glu-170 contribute to the active site. One can recognise a GMPS ATP-PPase domain in the interval 195–385 (WTPASIMTAS…LGLGSEIVDI (191 aa)). 222–228 (SGGVDSS) contributes to the ATP binding site.

In terms of assembly, homodimer.

The enzyme catalyses XMP + L-glutamine + ATP + H2O = GMP + L-glutamate + AMP + diphosphate + 2 H(+). Its pathway is purine metabolism; GMP biosynthesis; GMP from XMP (L-Gln route): step 1/1. Its function is as follows. Catalyzes the synthesis of GMP from XMP. The chain is GMP synthase [glutamine-hydrolyzing] from Elusimicrobium minutum (strain Pei191).